Consider the following 233-residue polypeptide: Ycf53-like protein (233 aa).

This sequence belongs to the ycf53 family.

The protein is Ycf53-like protein of Synechocystis sp. (strain ATCC 27184 / PCC 6803 / Kazusa).